Here is a 359-residue protein sequence, read N- to C-terminus: Non-functional pseudokinase ZRK2 (359 aa).

A compositionally biased stretch (basic residues) spans 1–10 (MKSMVKKLKQ). The segment at 1–20 (MKSMVKKLKQSLRSGSLEKR) is disordered. In terms of domain architecture, Protein kinase spans 64 to 356 (LKATSNFGSS…KELKQIETLF (293 aa)). Residues 70–78 (FGSSCFVTA) and Lys97 contribute to the ATP site.

It belongs to the protein kinase superfamily. Ser/Thr protein kinase family. ZRK subfamily.

This Arabidopsis thaliana (Mouse-ear cress) protein is Non-functional pseudokinase ZRK2.